Here is a 1816-residue protein sequence, read N- to C-terminus: MSGASVKVAVRVRPFNSRETSKESKCIIQMQGNSTSIINPKNPKEAPKSFSFDYSYWSHTSPEDPCFASQSRVYNDIGKEMLLHAFEGYNVCIFAYGQTGAGKSYTMMGKQEESQAGIIPQLCEELFEKINDNCNEDMSYSVEVSYMEIYCERVRDLLNPKNKGNLRVREHPLLGPYVEDLSKLAVTSYTDIADLMDAGNKARTVAATNMNETSSRSHAVFTIVFTQKKQDPETNLSTEKVSKISLVDLAGSERADSTGAKGTRLKEGANINKSLTTLGKVISALAEVDNCTSKSKKKKKTDFIPYRDSVLTWLLRENLGGNSRTAMVAALSPADINYDETLSTLRYADRAKQIKCNAVINEDPNAKLVRELKEEVTRLKDLLRAQGLGDIIDIDPLMDDYSGSGGKYLKDFQNNKHRYLLASENQRPGNFSTASMGSLTSSPSSCSLNSQAGLTSVTSIQERIMSTPGGEEAIERLKESEKIIAELNETWEEKLRKTEAIRMEREALLAEMGVAIREDGGTLGVFSPKKTPHLVNLNEDPLMSECLLYYIKDGITRVGQADAERRQDIVLSGAHIKEEHCIFRSERNNTGEVIVTLEPCERSETYVNGKRVAHPVQLRSGNRIIMGKNHVFRFNHPEQARAEREKTPSAETPSEPVDWTFAQRELLEKQGIDMKQEMEKRLQEMEILYKREKEEADLLLEQQRLDYESKLQALQKQVETRSLAAETTEEEEEEEEVPWTQHEFELAQWAFRKWKSHQFTSLRDLLWGNAVYLKEANAISVELKKKVQFQFVLLTDTLYSPVPPELLPTEMGKTHEDRPFPRTVVAVEVQDLKNGATHYWSLDKLKQRLDLMREMYDRAGEVGSNAQDDSETTMTGSDPFYDRFHWFKLVGSSPIFHGCVNERLADRTPSPTFSTADSDITELADEQQDAMEDFDDEAFVDDTGSDAGTEEGSELFSDGHDPFYDRSPWFILVGRAFVYLSNLLYPVPLIHRVAIVSEKGEVRGFLRVAVQAIAADEEAPDYGSGIRQSGTAKISFDNEYFNQSDFPSAAMTRSGLSLEELRIVEGQGQSSEVISPPEEVNRMNDLDLKSGTLLDGKMVMEGFSEEIGNHLKLGSAFTFRVTVLQASGILPEYADIFCQFNFLHRHDEAFSTEPLKNNGRGSPLGFYHVQNIAVEVTESFVDYIKTKPIVFEVFGHYQQHPLHLQGQELNSPPQPSRRFFPPPMPLSRPVPATKLNTMNKTSLGQSMSKYDLLVWFEISELEPTGEYIPAVVDHTAGLPCQGTFLLHQGIQRRITVTIIHEKGSELHWKDVRELVVGRIRNKPEVDEAAVDAILSLNIISAKSLKSSHSSSRTFYRFEAVWDSSLHNSLLLNRVTPYGEKIYMTLSAYLELDHCIQPAVITKDVCMVFYSRDAKISPPRSLRNLFGSGYSKSPDSNRVTGIYELSLCKMADTGSPGMQRRRRKVLDTSVAYVRGEENLAGWRPRGDSLILEHQWELEKLELLHEVEKTRHFLLLRERLGDSIPKSMSDSLSPSLSSGTLSTSTSISSQISTTTFESAITPSESSGYDSADIESLVDREKELATKCLQLLTHTFNREFSQVHGSISDCKLSDISPIGRDPSVSSFSSSTLTPSSTCPSLVDSRSSSMDQKTPEANSRASSPCQEFEQFQIIPTVETPYLARAGKNEFLNLVPDIEEVRAGSVVSKKGYLHFKEPLSSNWAKHFVVVRRPYVFIYNSDKDPVERGIINLSTAQVEYSEDQQAMLKTPNTFAVCTKHRGVLLQALNDKDMNDWLYAFNPLLAGTIRSKLSRRCPSQPKY.

Ser2 is modified (N-acetylserine). The region spanning Ser5 to Ile354 is the Kinesin motor domain. Gly97 to Ser104 contacts ATP. Residues Asn270 to Arg350 form an interaction with KIFBP region. The interval Phe431 to Ser450 is disordered. A compositionally biased stretch (low complexity) spans Ser432 to Ser450. A coiled-coil region spans residues Gly470–Met512. One can recognise an FHA domain in the interval Thr556–Val612. Phosphothreonine occurs at positions 647 and 652. A coiled-coil region spans residues Ile672–Glu731. A phosphoserine mark is found at Ser1054, Ser1057, Ser1416, Ser1454, and Ser1487. The disordered stretch occupies residues Ser1550–Asp1570. Phosphoserine is present on residues Ser1573, Ser1603, Ser1610, and Ser1613. The segment covering Ser1620 to Ser1637 has biased composition (low complexity). The segment at Ser1620–Ser1659 is disordered. Polar residues predominate over residues Asp1640–Ser1659. Residues Val1701–Ala1799 form the PH domain.

It belongs to the TRAFAC class myosin-kinesin ATPase superfamily. Kinesin family. Unc-104 subfamily. In terms of assembly, monomer. Interacts with KIFBP; positively regulates KIF1B microtubule motor activity. Interacts (via C-terminus end of the kinesin-motor domain) with CHP1; the interaction occurs in a calcium-dependent manner. Interacts with MADD (via death domain); links this isoform of KIF1B to Rab3-carrying vesicles in anterograde synaptic vesicle transport. In terms of tissue distribution, expressed in the brain with lower expression in testis and liver (at protein level). Strongly expressed in the brain and ovary, with lower expression in lung, kidney, uterus, testis and liver. As to expression, isoform 2 is expressed in non-neuronal tissues.

It is found in the cytoplasm. It localises to the cytoskeleton. The protein localises to the cytoplasmic vesicle. Its subcellular location is the secretory vesicle. The protein resides in the synaptic vesicle membrane. It is found in the lysosome. The enzyme catalyses ATP + H2O + a kinesin associated with a microtubule at position (n) = ADP + phosphate a kinesin associated with a microtubule at position (n+1, toward the plus end).. Functionally, has a plus-end-directed microtubule motor activity and functions as a motor for transport of vesicles and organelles along microtubules. Its function is as follows. Has a plus-end-directed microtubule motor activity and functions as a motor for anterograde synaptic vesicle transport along axonal microtubules from the cell body to the presynapse in neuronal cells. In terms of biological role, has a plus-end-directed microtubule motor activity and functions as a motor for the translocation of lysosomes from perinuclear regions to the cell periphery. The polypeptide is Kinesin-like protein KIF1B (Rattus norvegicus (Rat)).